A 262-amino-acid chain; its full sequence is Tryptophan synthase alpha chain (262 aa).

Residues Glu-49 and Asp-60 each act as proton acceptor in the active site.

The protein belongs to the TrpA family. Tetramer of two alpha and two beta chains.

It catalyses the reaction (1S,2R)-1-C-(indol-3-yl)glycerol 3-phosphate + L-serine = D-glyceraldehyde 3-phosphate + L-tryptophan + H2O. Its pathway is amino-acid biosynthesis; L-tryptophan biosynthesis; L-tryptophan from chorismate: step 5/5. In terms of biological role, the alpha subunit is responsible for the aldol cleavage of indoleglycerol phosphate to indole and glyceraldehyde 3-phosphate. This chain is Tryptophan synthase alpha chain, found in Thermoanaerobacter sp. (strain X514).